Reading from the N-terminus, the 437-residue chain is Purple acid phosphatase 18 (437 aa).

Positions 1–23 (MEKWGILLLVTLSVSIIFTSAAA) are cleaved as a signal peptide. Residues Asp148, Asp175, and Tyr178 each contribute to the Fe cation site. Asp175 serves as a coordination point for Zn(2+). Zn(2+)-binding residues include Asn208 and His291. Position 208 (Asn208) interacts with substrate. His301 serves as the catalytic Proton donor. His328 serves as a coordination point for Zn(2+). 328 to 330 (HVH) contacts substrate. His330 serves as a coordination point for Fe cation. N-linked (GlcNAc...) asparagine glycosylation is present at Asn390.

This sequence belongs to the metallophosphoesterase superfamily. Purple acid phosphatase family. As to quaternary structure, homodimer. Fe cation serves as cofactor. The cofactor is Zn(2+). As to expression, expressed in roots, stems, leaves, flowers and siliques.

It localises to the secreted. The catalysed reaction is a phosphate monoester + H2O = an alcohol + phosphate. In Arabidopsis thaliana (Mouse-ear cress), this protein is Purple acid phosphatase 18 (PAP18).